The chain runs to 385 residues: WD repeat-containing protein 74 (385 aa).

6 WD repeats span residues 40–80 (RREE…FQGQ), 83–122 (CPGG…ASSD), 128–168 (RVGP…EPLF), 179–220 (DLRV…RRPV), 224–266 (TYGE…GCLK), and 267–306 (GLAG…GLEH). A Phosphoserine modification is found at serine 214. Lysine 311 is subject to N6-methyllysine. Residues 320-385 (SGRDNWEDEP…KKKRPGSTSS (66 aa)) are required for nucleolar and nuclear location. Residues 323-385 (DNWEDEPQEP…KKKRPGSTSS (63 aa)) form a disordered region. The segment covering 372–385 (ARRRKKKRPGSTSS) has biased composition (basic residues).

As to quaternary structure, isoform 1 interacts (through WDR repeats) with NVL; the interaction is independent of RNA or pre-60S ribosome particles. Isoform 2 does not interact with NVL. Interacts with MTREX; the interaction dissociation in a late stage of rRNA synthesis is required for appropriate maturation of pre-60S particles and depends on the ATPase activity of NVL.

The protein resides in the nucleus. Its subcellular location is the nucleolus. In terms of biological role, regulatory protein of the MTREX-exosome complex involved in the synthesis of the 60S ribosomal subunit. Participates in an early cleavage of the pre-rRNA processing pathway in cooperation with NVL. This Bos taurus (Bovine) protein is WD repeat-containing protein 74 (WDR74).